Consider the following 300-residue polypeptide: Small ribosomal subunit biogenesis GTPase RsgA (300 aa).

A CP-type G domain is found at 69-231; sequence RSDEMRVKQF…LIDSPGFQAF (163 aa). GTP is bound by residues 119–122 and 172–180; these read NKID and GQSGMGKST. Cysteine 255, cysteine 260, histidine 262, and cysteine 268 together coordinate Zn(2+).

This sequence belongs to the TRAFAC class YlqF/YawG GTPase family. RsgA subfamily. Monomer. Associates with 30S ribosomal subunit, binds 16S rRNA. Zn(2+) serves as cofactor.

The protein localises to the cytoplasm. In terms of biological role, one of several proteins that assist in the late maturation steps of the functional core of the 30S ribosomal subunit. Helps release RbfA from mature subunits. May play a role in the assembly of ribosomal proteins into the subunit. Circularly permuted GTPase that catalyzes slow GTP hydrolysis, GTPase activity is stimulated by the 30S ribosomal subunit. In Bordetella bronchiseptica (strain ATCC BAA-588 / NCTC 13252 / RB50) (Alcaligenes bronchisepticus), this protein is Small ribosomal subunit biogenesis GTPase RsgA.